The following is a 550-amino-acid chain: Methionine--tRNA ligase (550 aa).

A 'HIGH' region motif is present at residues 10–22 (LPYPNNSSPHLGN). The 'KMSKS' region signature appears at 336–340 (KFSKS). Lysine 339 provides a ligand contact to ATP.

It belongs to the class-I aminoacyl-tRNA synthetase family.

It catalyses the reaction tRNA(Met) + L-methionine + ATP = L-methionyl-tRNA(Met) + AMP + diphosphate. The protein is Methionine--tRNA ligase (MARS) of Acanthamoeba polyphaga mimivirus (APMV).